The sequence spans 761 residues: Zinc finger protein 711 (761 aa).

Residues lysine 224, lysine 235, and lysine 296 each participate in a glycyl lysine isopeptide (Lys-Gly) (interchain with G-Cter in SUMO2) cross-link. 5 C2H2-type zinc fingers span residues 383–408, 414–436, 476–499, 505–527, and 533–556; these read YPCH…HPDH, YQCT…LESH, HKCK…LAVH, HVCV…MRTH, and YQCQ…KSKH. The C2H2-type 6; atypical zinc finger occupies 562-584; the sequence is YKCEHCPQAFGDERELQRHLDLF. Residues cysteine 564, cysteine 567, and histidine 580 each coordinate Zn(2+). 6 C2H2-type zinc fingers span residues 590-613, 619-641, 647-670, 676-698, 704-727, and 733-755; these read HQCP…ISVH, HKCE…SDIH, HQCR…LSVH, LKCK…MKTH, YQCE…ISIH, and HRCE…IMRH.

Belongs to the krueppel C2H2-type zinc-finger protein family. As to quaternary structure, interacts with PHF8.

It is found in the nucleus. Its function is as follows. Transcription regulator required for brain development. Probably acts as a transcription factor that binds to the promoter of target genes and recruits PHF8 histone demethylase, leading to activated expression of genes involved in neuron development, such as KDM5C. May compete with transcription factor ARX for activation of expression of KDM5C. The polypeptide is Zinc finger protein 711 (Znf711) (Mus musculus (Mouse)).